We begin with the raw amino-acid sequence, 474 residues long: L-arabinose isomerase (474 aa).

Residues Glu-306, Glu-331, His-348, and His-447 each contribute to the Mn(2+) site.

It belongs to the arabinose isomerase family. Requires Mn(2+) as cofactor.

The enzyme catalyses beta-L-arabinopyranose = L-ribulose. Its pathway is carbohydrate degradation; L-arabinose degradation via L-ribulose; D-xylulose 5-phosphate from L-arabinose (bacterial route): step 1/3. Catalyzes the conversion of L-arabinose to L-ribulose. The sequence is that of L-arabinose isomerase from Leuconostoc mesenteroides subsp. mesenteroides (strain ATCC 8293 / DSM 20343 / BCRC 11652 / CCM 1803 / JCM 6124 / NCDO 523 / NBRC 100496 / NCIMB 8023 / NCTC 12954 / NRRL B-1118 / 37Y).